Reading from the N-terminus, the 66-residue chain is UPF0337 protein bsl1473 (66 aa).

It belongs to the UPF0337 (CsbD) family.

In Bradyrhizobium diazoefficiens (strain JCM 10833 / BCRC 13528 / IAM 13628 / NBRC 14792 / USDA 110), this protein is UPF0337 protein bsl1473.